We begin with the raw amino-acid sequence, 81 residues long: CLAVATA3/ESR (CLE)-related protein 25 (81 aa).

A signal peptide spans 1–30; it reads MGGNGIRALVGVIASLGLIVFLLVGILANS. The disordered stretch occupies residues 57–81; it reads KRKVPNGPDPIHNRKAETSRRPPRV. Pro61 and Pro64 each carry hydroxyproline. O-linked (Ara...) hydroxyproline glycosylation is present at Pro64. Residues 67–81 show a composition bias toward basic and acidic residues; the sequence is IHNRKAETSRRPPRV.

This sequence belongs to the CLV3/ESR signal peptide family. The O-glycosylation (arabinosylation) of the hydroxyproline Pro-64 enhances binding affinity of the CLE25p peptide for its receptor. Mostly expressed in flowers and siliques, and, to a lower extent, in roots, stems, apex, seedlings, leaves and pollen.

The protein resides in the secreted. The protein localises to the extracellular space. Its function is as follows. Extracellular signal peptide that regulates cell fate. Represses root apical meristem maintenance. Regulates the transition of protophloem cells from proliferation to differentiation, thus impinging on postembryonic growth capacity of the root meristem; this signaling pathway requires CRN and CLV2. The chain is CLAVATA3/ESR (CLE)-related protein 25 from Arabidopsis thaliana (Mouse-ear cress).